A 228-amino-acid polypeptide reads, in one-letter code: E3 ubiquitin-protein ligase RNF114 (228 aa).

The RING-type zinc-finger motif lies at 29–68; that stretch reads CPVCLEVYEKPVQVPCGHVFCSACLQECLKPKKPVCGVCR. Residues Cys-91 and Cys-94 each coordinate Zn(2+). A C2HC RNF-type zinc finger spans residues 91–110; that stretch reads CHGCRKKFFLSKIRSHVATC. Lys-102 carries the post-translational modification N6-acetyllysine. Zn(2+) is bound by residues His-106 and Cys-110. An N6-acetyllysine modification is found at Lys-112.

In terms of assembly, interacts with XAF1, the interaction increases XAF1 stability and proapoptotic effects, and may regulate IFN signaling. In terms of processing, autoubiquitinated. Polyubiquitinated in the presence of E2 enzymes UBE2D1, UBE2D2 and UBE2D3, but only monoubiquitinated in the presence of UBE2E1.

The protein resides in the cytoplasm. It is found in the nucleus. It catalyses the reaction S-ubiquitinyl-[E2 ubiquitin-conjugating enzyme]-L-cysteine + [acceptor protein]-L-lysine = [E2 ubiquitin-conjugating enzyme]-L-cysteine + N(6)-ubiquitinyl-[acceptor protein]-L-lysine.. Its pathway is protein modification; protein ubiquitination. Functionally, E3 ubiquitin-protein ligase that promotes the ubiquitination of various substrates. In turn, participates in the regulation of many biological processes including cell cycle, apoptosis, osteoclastogenesis as well as innate or adaptive immunity. Acts as negative regulator of NF-kappa-B-dependent transcription by promoting the ubiquitination and stabilization of the NF-kappa-B inhibitor TNFAIP3. May promote the ubiquitination of TRAF6 as well. Also acts as a negative regulator of T-cell activation. Inhibits cellular dsRNA responses and interferon production by targeting MAVS component for proteasomal degradation. Ubiquitinates the CDK inhibitor CDKN1A leading to its degradationand probably also CDKN1B and CDKN1C. This activity stimulates cell cycle G1-to-S phase transition and suppresses cellular senescence. May play a role in spermatogenesis. The sequence is that of E3 ubiquitin-protein ligase RNF114 (RNF114) from Pan troglodytes (Chimpanzee).